The following is a 341-amino-acid chain: Dihydroorotate dehydrogenase (quinone) (341 aa).

FMN-binding positions include A61–K65 and T85. K65 contacts substrate. Position 110 to 114 (N110 to F114) interacts with substrate. Residues N138 and N171 each contribute to the FMN site. Position 171 (N171) interacts with substrate. Catalysis depends on S174, which acts as the Nucleophile. N176 lines the substrate pocket. Residues K216 and T244 each contribute to the FMN site. Position 245–246 (N245–T246) interacts with substrate. FMN is bound by residues G267, G296, and Y317–S318.

The protein belongs to the dihydroorotate dehydrogenase family. Type 2 subfamily. In terms of assembly, monomer. It depends on FMN as a cofactor.

The protein localises to the cell membrane. The catalysed reaction is (S)-dihydroorotate + a quinone = orotate + a quinol. It participates in pyrimidine metabolism; UMP biosynthesis via de novo pathway; orotate from (S)-dihydroorotate (quinone route): step 1/1. Catalyzes the conversion of dihydroorotate to orotate with quinone as electron acceptor. The polypeptide is Dihydroorotate dehydrogenase (quinone) (Pseudomonas fluorescens (strain SBW25)).